A 287-amino-acid chain; its full sequence is Ribosomal RNA-processing protein 8 (287 aa).

Positions 1–62 are disordered; the sequence is MTTEENKTSR…SAPSKRPKPS (62 aa). Over residues 9 to 21 the composition is skewed to basic residues; the sequence is SRNRKRKRQRNPK. A compositionally biased stretch (basic and acidic residues) spans 35-46; it reads QNEKKNQRDTKN. Residues histidine 107, glycine 142, aspartate 160, aspartate 172, methionine 173, and cysteine 189 each coordinate S-adenosyl-L-methionine.

This sequence belongs to the methyltransferase superfamily. RRP8 family.

Its subcellular location is the nucleus. The protein resides in the nucleolus. Its function is as follows. Probable methyltransferase required to silence rDNA. This chain is Ribosomal RNA-processing protein 8, found in Arabidopsis thaliana (Mouse-ear cress).